The sequence spans 201 residues: Orotate phosphoribosyltransferase (201 aa).

113-121 (EDIITTGKS) serves as a coordination point for 5-phospho-alpha-D-ribose 1-diphosphate. Orotate contacts are provided by Thr117 and Arg145.

Belongs to the purine/pyrimidine phosphoribosyltransferase family. PyrE subfamily. Homodimer. The cofactor is Mg(2+).

It catalyses the reaction orotidine 5'-phosphate + diphosphate = orotate + 5-phospho-alpha-D-ribose 1-diphosphate. It functions in the pathway pyrimidine metabolism; UMP biosynthesis via de novo pathway; UMP from orotate: step 1/2. In terms of biological role, catalyzes the transfer of a ribosyl phosphate group from 5-phosphoribose 1-diphosphate to orotate, leading to the formation of orotidine monophosphate (OMP). In Helicobacter pylori (strain ATCC 700392 / 26695) (Campylobacter pylori), this protein is Orotate phosphoribosyltransferase.